A 231-amino-acid chain; its full sequence is tRNA (guanine-N(1)-)-methyltransferase (231 aa).

S-adenosyl-L-methionine is bound by residues G112 and 132-137 (IGDYIL).

Belongs to the RNA methyltransferase TrmD family. In terms of assembly, homodimer.

Its subcellular location is the cytoplasm. The enzyme catalyses guanosine(37) in tRNA + S-adenosyl-L-methionine = N(1)-methylguanosine(37) in tRNA + S-adenosyl-L-homocysteine + H(+). Specifically methylates guanosine-37 in various tRNAs. This Sulfurimonas denitrificans (strain ATCC 33889 / DSM 1251) (Thiomicrospira denitrificans (strain ATCC 33889 / DSM 1251)) protein is tRNA (guanine-N(1)-)-methyltransferase.